The sequence spans 1024 residues: Beta-galactosidase (1024 aa).

Substrate is bound by residues Asn103 and Asp202. Position 202 (Asp202) interacts with Na(+). Mg(2+)-binding residues include Glu417, His419, and Glu462. Substrate contacts are provided by residues Glu462 and 538-541 (EYAH). The active-site Proton donor is the Glu462. The Nucleophile role is filled by Glu538. Asn598 contributes to the Mg(2+) binding site. Na(+)-binding residues include Phe602 and Asn605. Substrate contacts are provided by Asn605 and Trp1000.

It belongs to the glycosyl hydrolase 2 family. Homotetramer. Mg(2+) is required as a cofactor. It depends on Na(+) as a cofactor.

It catalyses the reaction Hydrolysis of terminal non-reducing beta-D-galactose residues in beta-D-galactosides.. This Escherichia coli O6:K15:H31 (strain 536 / UPEC) protein is Beta-galactosidase.